We begin with the raw amino-acid sequence, 318 residues long: Inactive dihydropteroate synthase 2 (318 aa).

The tract at residues 1–25 (MRSTPPASAGRSTPPALAGHSTPPA) is disordered. The region spanning 42–299 (ALIMAIVNRT…EVAATRRVLE (258 aa)) is the Pterin-binding domain.

This sequence belongs to the DHPS family. As to quaternary structure, homodimer.

Has very low affinity for the DHPS substrate 6-hydroxymethyl-7,8-dihydropterin-pyrophosphate, but can bind the inhibitor dapsone. Seems to lack dihydropteroate synthase activity, and does probably not function in folate metabolism. In Mycobacterium bovis (strain ATCC BAA-935 / AF2122/97), this protein is Inactive dihydropteroate synthase 2 (folP2).